Consider the following 158-residue polypeptide: Transcription elongation factor GreA (158 aa).

Positions 48 to 75 (NSEYDSAKEDQAFVEGRIAQLEKMIRNA) form a coiled coil.

This sequence belongs to the GreA/GreB family.

Its function is as follows. Necessary for efficient RNA polymerase transcription elongation past template-encoded arresting sites. The arresting sites in DNA have the property of trapping a certain fraction of elongating RNA polymerases that pass through, resulting in locked ternary complexes. Cleavage of the nascent transcript by cleavage factors such as GreA or GreB allows the resumption of elongation from the new 3'terminus. GreA releases sequences of 2 to 3 nucleotides. The protein is Transcription elongation factor GreA of Shouchella clausii (strain KSM-K16) (Alkalihalobacillus clausii).